Here is a 261-residue protein sequence, read N- to C-terminus: Adenosylcobinamide-GDP ribazoletransferase (261 aa).

Helical transmembrane passes span 31 to 51, 59 to 79, 125 to 145, 183 to 203, and 240 to 260; these read YAIC…FLTF, LGDI…SGGI, FGMV…FFVV, VIYL…LTVV, and LMAG…TGHW.

This sequence belongs to the CobS family. Mg(2+) serves as cofactor.

It localises to the cell membrane. The enzyme catalyses alpha-ribazole + adenosylcob(III)inamide-GDP = adenosylcob(III)alamin + GMP + H(+). The catalysed reaction is alpha-ribazole 5'-phosphate + adenosylcob(III)inamide-GDP = adenosylcob(III)alamin 5'-phosphate + GMP + H(+). The protein operates within cofactor biosynthesis; adenosylcobalamin biosynthesis; adenosylcobalamin from cob(II)yrinate a,c-diamide: step 7/7. Functionally, joins adenosylcobinamide-GDP and alpha-ribazole to generate adenosylcobalamin (Ado-cobalamin). Also synthesizes adenosylcobalamin 5'-phosphate from adenosylcobinamide-GDP and alpha-ribazole 5'-phosphate. In Lachnoclostridium phytofermentans (strain ATCC 700394 / DSM 18823 / ISDg) (Clostridium phytofermentans), this protein is Adenosylcobinamide-GDP ribazoletransferase.